A 166-amino-acid polypeptide reads, in one-letter code: Co-chaperone protein HscB homolog (166 aa).

One can recognise a J domain in the interval 3–75; it reads QYFTLFRIEP…IDRAAYLLKT (73 aa).

This sequence belongs to the HscB family. In terms of assembly, interacts with HscA and stimulates its ATPase activity.

Co-chaperone involved in the maturation of iron-sulfur cluster-containing proteins. Seems to help targeting proteins to be folded toward HscA. The protein is Co-chaperone protein HscB homolog of Neisseria gonorrhoeae (strain NCCP11945).